Here is a 75-residue protein sequence, read N- to C-terminus: Serine rich endogenous peptide 4 (75 aa).

The N-terminal stretch at 1 to 31 is a signal peptide; sequence MATKTSNLGHLLLSLFILLLFILSQVGVAQA. The disordered stretch occupies residues 51–75; that stretch reads PPPLRGIVKPPIASFHSASPKDKGP. The short motif at 61 to 75 is the SCOOP motif element; sequence PIASFHSASPKDKGP. Residues 67–69 carry the SxS motif essential for MIK2 binding motif; the sequence is SAS.

Belongs to the serine rich endogenous peptide (SCOOP) phytocytokine family. In terms of assembly, interacts with MIK2 (via extracellular leucine-rich repeat domain); this interaction triggers the formation of complex between MIK2 and the BAK1/SERK3 and SERK4 coreceptors, and subsequent BAK1 activation by phosphorylation. Mostly expressed in leaves and seedlings shoots, and, to a lower extent, in roots, stems, siliques, seeds and flowers.

The protein localises to the cell membrane. Its subcellular location is the secreted. The protein resides in the extracellular space. It is found in the apoplast. Its function is as follows. Brassicaceae-specific phytocytokine (plant endogenous peptide released into the apoplast) perceived by MIK2 in a BAK1/SERK3 and SERK4 coreceptors-dependent manner, that modulates various physiological and antimicrobial processes including growth prevention and reactive oxygen species (ROS) response regulation. Inhibits root growth. Prevents general growth and development. Exhibits antibacterial effects against Pseudomonas syringae pv. tomato DC3000, Ralstonia solanacearum, Bacillus subtilis and Agrobacterium tumefaciens, thus being an antimicrobial peptide (AMP). This Arabidopsis thaliana (Mouse-ear cress) protein is Serine rich endogenous peptide 4.